The following is a 256-amino-acid chain: H-2 class II histocompatibility antigen, A-D alpha chain (256 aa).

The N-terminal stretch at 1-23 is a signal peptide; that stretch reads MPCSRALILGVLALNTMLSLCGG. The segment at 24–111 is alpha-1; it reads EDDIEADHVG…KRSNFTPATN (88 aa). The Extracellular portion of the chain corresponds to 24-218; the sequence is EDDIEADHVG…IPAPMSELTE (195 aa). Residues 112–205 form an alpha-2 region; that stretch reads EAPQATVFPK…GLEEPVLKHW (94 aa). The Ig-like C1-type domain occupies 114–206; the sequence is PQATVFPKSP…LEEPVLKHWE (93 aa). C134 and C190 are oxidised to a cystine. N-linked (GlcNAc...) asparagine glycosylation occurs at N145. The interval 206–218 is connecting peptide; sequence EPEIPAPMSELTE. A helical membrane pass occupies residues 219-244; the sequence is TVVCALGLSVGLVGIVVGTIFIIQGL. The Cytoplasmic portion of the chain corresponds to 245 to 256; sequence RSGGTSRHPGPL.

It belongs to the MHC class II family.

Its subcellular location is the membrane. This chain is H-2 class II histocompatibility antigen, A-D alpha chain (H2-Aa), found in Mus musculus (Mouse).